The primary structure comprises 198 residues: Phage-like element PBSX protein XkdA (198 aa).

The protein to B.subtilis YqaB.

This Bacillus subtilis (strain 168) protein is Phage-like element PBSX protein XkdA (xkdA).